Here is a 132-residue protein sequence, read N- to C-terminus: MAFDSTWKVDRSENYDKFMEKMGVNIVKRKLAAHDNLKLTITQEGNKFTVKESSTFRNIEVVFELGVTFNYNLADGTELRGTWSLEGNKLIGKFKRTDNGNELNTVREIIGDELVQTYVYEGVEAKRIFKKD.

An N-acetylalanine modification is found at Ala-2. Residues Trp-83 and Arg-107 each contribute to the hexadecanoate site. Residues Trp-83 and Arg-107 each contribute to the tetradecanoate site.

This sequence belongs to the calycin superfamily. Fatty-acid binding protein (FABP) family. As to expression, expressed in the small intestine and at much lower levels in the large intestine. Highest expression levels in the jejunum.

Its subcellular location is the cytoplasm. In terms of biological role, FABPs are thought to play a role in the intracellular transport of long-chain fatty acids and their acyl-CoA esters. FABP2 is probably involved in triglyceride-rich lipoprotein synthesis. Binds saturated long-chain fatty acids with a high affinity, but binds with a lower affinity to unsaturated long-chain fatty acids. FABP2 may also help maintain energy homeostasis by functioning as a lipid sensor. This chain is Fatty acid-binding protein, intestinal (FABP2), found in Homo sapiens (Human).